Reading from the N-terminus, the 293-residue chain is Ribosomal protein L11 methyltransferase (293 aa).

Residues T145, G166, D188, and N230 each contribute to the S-adenosyl-L-methionine site.

Belongs to the methyltransferase superfamily. PrmA family.

It is found in the cytoplasm. The enzyme catalyses L-lysyl-[protein] + 3 S-adenosyl-L-methionine = N(6),N(6),N(6)-trimethyl-L-lysyl-[protein] + 3 S-adenosyl-L-homocysteine + 3 H(+). Functionally, methylates ribosomal protein L11. This Shewanella baltica (strain OS185) protein is Ribosomal protein L11 methyltransferase.